A 213-amino-acid polypeptide reads, in one-letter code: Superoxide dismutase [Fe] (213 aa).

His-28, His-82, Asp-164, and His-168 together coordinate Fe cation.

This sequence belongs to the iron/manganese superoxide dismutase family. In terms of assembly, homotetramer. Fe cation serves as cofactor.

The enzyme catalyses 2 superoxide + 2 H(+) = H2O2 + O2. In terms of biological role, destroys superoxide anion radicals which are normally produced within the cells and which are toxic to biological systems. The sequence is that of Superoxide dismutase [Fe] (sodB) from Aquifex aeolicus (strain VF5).